A 522-amino-acid polypeptide reads, in one-letter code: TNF receptor-associated factor 6 (522 aa).

The interaction with TAX1BP1 stretch occupies residues 1–354; the sequence is MSLLNCENSC…EAQQCNGIYI (354 aa). An RING-type zinc finger spans residues 70–109; it reads CPICLMALREAVQTPCGHRFCKACIIKSIRDAGHKCPVDN. Lysine 124 is covalently cross-linked (Glycyl lysine isopeptide (Lys-Gly) (interchain with G-Cter in SUMO); alternate). Residue lysine 124 forms a Glycyl lysine isopeptide (Lys-Gly) (interchain with G-Cter in ubiquitin); alternate linkage. A Glycyl lysine isopeptide (Lys-Gly) (interchain with G-Cter in SUMO) cross-link involves residue lysine 142. TRAF-type zinc fingers lie at residues 150 to 202 and 203 to 259; these read DHQA…EDKE and IHDQ…NHLA. Residues 288 to 348 are a coiled coil; sequence YISEVRNFQE…DKVAEIEAQQ (61 aa). Lysine 319 participates in a covalent cross-link: Glycyl lysine isopeptide (Lys-Gly) (interchain with G-Cter in ubiquitin). The MATH domain occupies 350-499; sequence NGIYIWKIGN…DDTLLVRCEV (150 aa). The segment at 355 to 522 is interaction with TANK; that stretch reads WKIGNFGMHL…FQPRSTDAGV (168 aa). Lysine 453 participates in a covalent cross-link: Glycyl lysine isopeptide (Lys-Gly) (interchain with G-Cter in SUMO).

Belongs to the TNF receptor-associated factor family. A subfamily. Homotrimer. Homooligomer. N-terminal region is dimeric while C-terminal region is trimeric; maybe providing a mode of oligomerization. Upon IL1B treatment, forms a complex with PELI1, IRAK1, IRAK4 and MYD88; this complex recruits MAP3K7/TAK1, TAB1 and TAB2 to mediate NF-kappa-B activation. Direct binding of SMAD6 to PELI1 prevents the complex formation and hence negatively regulates IL1R-TLR signaling and eventually NF-kappa-B-mediated gene expression. Binds to TNFRSF5/CD40 and TNFRSF11A/RANK. Associates with NGFR, TNFRSF17, IRAK2, IRAK3, RIPK2, MAP3K1, MAP3K5, MAP3K14, CSK, TRAF, TRAF-interacting protein TRIP and TNF receptor associated protein TDP2. Interacts with IL17R. Interacts with SQSTM1 bridging NTRK1 and NGFR. Forms a ternary complex with SQSTM1 and PRKCZ. Interacts with PELI2 and PELI3. Binds UBE2V1. Interacts with TAX1BP1; this interaction mediates deubiquitination of TRAF6 and inhibition of NF-kappa-B activation. Interacts with ZNF675. Interacts with ARRB1 and ARRB2. Interacts with MAP3K7 and TAB1/MAP3K7IP1; during IL-1 signaling. Interacts with UBE2N. Interacts with TGFBR1, HDAC1 and RANGAP1. Interacts with AKT1, AKT2 and AKT3. Interacts (via TRAF domains) with NUMBL (via C-terminal). Interacts with RBCK1. Interacts with LIMD1 (via LIM domains). Interacts with RSAD2/viperin. Interacts (via C-terminus) with EIF2AK2/PKR (via the kinase catalytic domain). Interacts with ZFAND5. Interacts with IL1RL1. Interacts with TRAFD1. Interacts with AJUBA. Interacts with MAVS/IPS1. Interacts (via TRAF domains) with DYNC2I2 (via WD domains). Interacts with IFIT3 (via N-terminus). Interacts with TICAM2. Interacts with CARD14. Interacts with CD40 and MAP3K8; the interaction is required for ERK activation. Interacts with TICAM1 and this interaction is enhanced in the presence of WDFY1. Interacts with TANK; this interaction increases in response to DNA damage. Interacts with USP10; this interaction increases in response to DNA damage. Interacts with ZC3H12A; this interaction increases in response to DNA damage and is stimulated by TANK. Interacts with WDFY3. Interacts with TRIM13. Interacts with GPS2. Interacts (via C-terminus) with SASH1. Interacts with LRRC19. Interacts with IL17RA and TRAF3IP2. Interacts with TOMM70. Interacts with AMBRA1; interaction is required to mediate 'Lys-63'-linked ubiquitination of ULK1. Interacts with CRBN; this interaction inhibits TLR4-mediated signaling by preventing TRAF6-mediated ubiquitination of ECSIT. In terms of processing, sumoylated on Lys-124, Lys-142 and Lys-453 with SUMO1. Post-translationally, polyubiquitinated on Lys-124 by TRAF3IP2; after cell stimulation with IL17A. Polyubiquitinated on Lys-124; after cell stimulation with IL1B or TGFB. This ligand-induced cell stimulation leads to dimerization/oligomerization of TRAF6 molecules, followed by auto-ubiquitination which involves UBE2N and UBE2V1 and leads to TRAF6 activation. This 'Lys-63' site-specific poly-ubiquitination appears to be associated with the activation of signaling molecules. Endogenous autoubiquitination occurs only for the cytoplasmic form. Deubiquitinated by USP10 in a TANK-dependent manner, leading to the negative regulation of NF-kappaB signaling upon DNA damage. LRRC19 induces 'Lys-63' ubiquitination. Ubiquitinated at Lys-319 by the SCF(FBXL2) complex, leading to its degradation by the proteasome. (Microbial infection) Deubiquitinated by Epstein-Barr virus BPLF1 on both 'Lys-48' and 'Lys-63'-linked ubiquitin chains; leading to NF-kappa-B signaling inhibition. Expressed in heart, brain, placenta, lung, liver, skeletal muscle, kidney and pancreas.

It localises to the cytoplasm. The protein localises to the cell cortex. Its subcellular location is the nucleus. It is found in the lipid droplet. The catalysed reaction is S-ubiquitinyl-[E2 ubiquitin-conjugating enzyme]-L-cysteine + [acceptor protein]-L-lysine = [E2 ubiquitin-conjugating enzyme]-L-cysteine + N(6)-ubiquitinyl-[acceptor protein]-L-lysine.. It participates in protein modification; protein ubiquitination. E3 ubiquitin ligase that, together with UBE2N and UBE2V1, mediates the synthesis of 'Lys-63'-linked-polyubiquitin chains conjugated to proteins, such as ECSIT, IKBKG, IRAK1, AKT1 and AKT2. Also mediates ubiquitination of free/unanchored polyubiquitin chain that leads to MAP3K7 activation. Leads to the activation of NF-kappa-B and JUN. Seems to also play a role in dendritic cells (DCs) maturation and/or activation. Represses c-Myb-mediated transactivation, in B-lymphocytes. Adapter protein that seems to play a role in signal transduction initiated via TNF receptor, IL-1 receptor and IL-17 receptor. Regulates osteoclast differentiation by mediating the activation of adapter protein complex 1 (AP-1) and NF-kappa-B, in response to RANK-L stimulation. Together with MAP3K8, mediates CD40 signals that activate ERK in B-cells and macrophages, and thus may play a role in the regulation of immunoglobulin production. Acts as a regulator of the JNK and NF-kappa-B signaling pathways by initiating assembly of heterotypic 'Lys-63'-/'Lys-48'-linked branched ubiquitin chains that are then recognized by TAB2: TRAF6 catalyzes initial 'Lys-63'-linked-polyubiquitin chains that are then branched via 'Lys-48'-linked polyubiquitin by HUWE1. 'Lys-63'-/'Lys-48'-linked branched ubiquitin chains protect 'Lys-63'-linkages from CYLD deubiquitination. Participates also in the TCR signaling by ubiquitinating LAT. This is TNF receptor-associated factor 6 (TRAF6) from Homo sapiens (Human).